A 157-amino-acid polypeptide reads, in one-letter code: S-ribosylhomocysteine lyase (157 aa).

His-54, His-58, and Cys-126 together coordinate Fe cation.

This sequence belongs to the LuxS family. As to quaternary structure, homodimer. The cofactor is Fe cation.

The enzyme catalyses S-(5-deoxy-D-ribos-5-yl)-L-homocysteine = (S)-4,5-dihydroxypentane-2,3-dione + L-homocysteine. Functionally, involved in the synthesis of autoinducer 2 (AI-2) which is secreted by bacteria and is used to communicate both the cell density and the metabolic potential of the environment. The regulation of gene expression in response to changes in cell density is called quorum sensing. Catalyzes the transformation of S-ribosylhomocysteine (RHC) to homocysteine (HC) and 4,5-dihydroxy-2,3-pentadione (DPD). In Bacillus cereus (strain 03BB102), this protein is S-ribosylhomocysteine lyase.